Consider the following 256-residue polypeptide: Phosphatidylglycerol--prolipoprotein diacylglyceryl transferase (256 aa).

3 helical membrane-spanning segments follow: residues 19–39, 56–76, and 91–111; these read VHWY…LGYW, LIFY…MLFY, and IWEG…AAWL. An a 1,2-diacyl-sn-glycero-3-phospho-(1'-sn-glycerol)-binding site is contributed by arginine 139. A helical transmembrane segment spans residues 231 to 251; the sequence is FGWLTMGQVLSIPMLLIGIWL.

It belongs to the Lgt family.

The protein resides in the cell inner membrane. The enzyme catalyses L-cysteinyl-[prolipoprotein] + a 1,2-diacyl-sn-glycero-3-phospho-(1'-sn-glycerol) = an S-1,2-diacyl-sn-glyceryl-L-cysteinyl-[prolipoprotein] + sn-glycerol 1-phosphate + H(+). Its pathway is protein modification; lipoprotein biosynthesis (diacylglyceryl transfer). Functionally, catalyzes the transfer of the diacylglyceryl group from phosphatidylglycerol to the sulfhydryl group of the N-terminal cysteine of a prolipoprotein, the first step in the formation of mature lipoproteins. The protein is Phosphatidylglycerol--prolipoprotein diacylglyceryl transferase of Legionella pneumophila (strain Paris).